Reading from the N-terminus, the 559-residue chain is Endoglin (559 aa).

An N-terminal signal peptide occupies residues 1 to 20; that stretch reads MKSICCVLVLCLLLCRRSTA. The Extracellular portion of the chain corresponds to 21–473; the sequence is SESICELKDV…SCFEFGLSAV (453 aa). Disulfide bonds link cysteine 25–cysteine 201 and cysteine 47–cysteine 174. N-linked (GlcNAc...) asparagine glycans are attached at residues asparagine 55, asparagine 79, asparagine 109, asparagine 133, asparagine 170, asparagine 302, and asparagine 352. Cysteine 381 and cysteine 427 are disulfide-bonded. A helical membrane pass occupies residues 474 to 494; the sequence is LGIAFGGFLIGVLLTGALWFI. The Cytoplasmic segment spans residues 495 to 559; sequence KIRTGHPVAL…TQSTPTSSMA (65 aa). Positions 528-559 are disordered; sequence RQPVPTHPSPSENSSANASIGSTQSTPTSSMA. The segment covering 536-546 has biased composition (low complexity); it reads SPSENSSANAS. Positions 547–559 are enriched in polar residues; it reads IGSTQSTPTSSMA.

As to quaternary structure, homodimer; disulfide-linked.

It is found in the cell membrane. Its function is as follows. Vascular endothelium glycoprotein that plays an important role in the regulation of angiogenesis. Required for normal structure and integrity of adult vasculature. Important for endothelial cell shape changes in response to blood flow, which drive vascular remodeling and establishment of normal vascular morphology during angiogenesis. In Danio rerio (Zebrafish), this protein is Endoglin.